Here is a 527-residue protein sequence, read N- to C-terminus: ARS-binding protein 2 (527 aa).

Disordered regions lie at residues 160 to 184 (PDVN…HSAS), 219 to 265 (SHHM…NSHN), and 282 to 344 (IDPD…IKRL). Over residues 164 to 177 (SSSISTMRTSTSPS) the composition is skewed to low complexity. Residues 225–239 (RGSQQAHQTTPQNHS) are compositionally biased toward polar residues. Basic and acidic residues predominate over residues 284 to 303 (PDWHQWPDDLRDVSSPKESD). 3 positions are modified to phosphoserine: serine 297, serine 298, and serine 302. Over residues 328-343 (PRKRGRPPGARNKIKR) the composition is skewed to basic residues.

The protein resides in the nucleus. In terms of biological role, binds, preferentially, to the Maundrell ARS consensus sequence within ARS3002. The polypeptide is ARS-binding protein 2 (abp2) (Schizosaccharomyces pombe (strain 972 / ATCC 24843) (Fission yeast)).